The primary structure comprises 461 residues: Peptidyl-prolyl cis-trans isomerase-like 4 (461 aa).

Positions 1-171 (MSVLLETSLG…KDIRIRHTVI (171 aa)) constitute a PPIase cyclophilin-type domain. The region spanning 248 to 326 (NVLFVCKLNP…HRIHVDFSQS (79 aa)) is the RRM domain. The segment at 372–461 (NYNMVFDKND…DDRYRDRRRR (90 aa)) is disordered. 2 stretches are compositionally biased toward basic and acidic residues: residues 378-392 (DKNDNRRSAPRERSY) and 400-461 (NYRD…RRRR).

This sequence belongs to the cyclophilin-type PPIase family. PPIL4 subfamily.

The protein resides in the nucleus. It carries out the reaction [protein]-peptidylproline (omega=180) = [protein]-peptidylproline (omega=0). In terms of biological role, PPIases accelerate the folding of proteins. It catalyzes the cis-trans isomerization of proline imidic peptide bonds in oligopeptides. The polypeptide is Peptidyl-prolyl cis-trans isomerase-like 4 (cyp6) (Emericella nidulans (strain FGSC A4 / ATCC 38163 / CBS 112.46 / NRRL 194 / M139) (Aspergillus nidulans)).